Here is a 93-residue protein sequence, read N- to C-terminus: Small ribosomal subunit protein bS18c (93 aa).

The protein belongs to the bacterial ribosomal protein bS18 family. Part of the 30S ribosomal subunit.

It is found in the plastid. It localises to the chloroplast. This chain is Small ribosomal subunit protein bS18c, found in Pinus koraiensis (Korean pine).